Here is a 250-residue protein sequence, read N- to C-terminus: MAEIAPLRVQLIAKTDFLAPPDVPWSTDADGGPALVEFAGRACYQSWSKPNPKTATNAGYIKHIIDVGHFSVLEHASVSFYITGISRSCTHELIRHRHFSYSQLSQRYVPENDSRVVVPPGLDDDPELQQILAAAADASRATYTELLARLEAKFADQPSAVLRRKQARQAARAVLPNATETRIVVTGNYRAWRHFIAMRASEHADVEIRRLAIECLRRLADVAPAVFADFEIATLADGTEVATSPLATEA.

A ThyX domain is found at 7-233; the sequence is LRVQLIAKTD…PAVFADFEIA (227 aa). Residues serine 71, 95–97, and glutamine 103 contribute to the FAD site; that span reads RHR. DUMP contacts are provided by residues 92–95, 103–107, and arginine 172; these read ELIR and QLSQR. A ThyX motif motif is present at residues 95-105; that stretch reads RHRHFSYSQLS. FAD is bound by residues 188-190 and histidine 194; that span reads NYR. A dUMP-binding site is contributed by arginine 199. Arginine 199 (involved in ionization of N3 of dUMP, leading to its activation) is an active-site residue.

This sequence belongs to the thymidylate synthase ThyX family. As to quaternary structure, homotetramer. It depends on FAD as a cofactor.

The catalysed reaction is dUMP + (6R)-5,10-methylene-5,6,7,8-tetrahydrofolate + NADPH + H(+) = dTMP + (6S)-5,6,7,8-tetrahydrofolate + NADP(+). It functions in the pathway pyrimidine metabolism; dTTP biosynthesis. In terms of biological role, catalyzes the reductive methylation of 2'-deoxyuridine-5'-monophosphate (dUMP) to 2'-deoxythymidine-5'-monophosphate (dTMP) while utilizing 5,10-methylenetetrahydrofolate (mTHF) as the methyl donor, and NADPH and FADH(2) as the reductant. This chain is Flavin-dependent thymidylate synthase, found in Mycobacterium avium (strain 104).